The primary structure comprises 272 residues: Leucoagglutinating phytohemagglutinin (272 aa).

Positions 1–20 (MASSKFFTVLFLVLLTHANS) are cleaved as a signal peptide. N32 is a glycosylation site (N-linked (GlcNAc...) (high mannose) asparagine). N-linked (GlcNAc...) (complex) asparagine glycosylation occurs at N80.

This sequence belongs to the leguminous lectin family. Homotetramer. N-glycosylated on Asn-80; contains xylose.

Functionally, this insecticidal carbohydrate-binding lectin is toxic for the cowpea weevil. The chain is Leucoagglutinating phytohemagglutinin (DLEC2) from Phaseolus vulgaris (Kidney bean).